Consider the following 456-residue polypeptide: uncharacterized protein (456 aa).

The region spanning 5 to 63 (LVKKGQQISLKIKRLGINGEGIGYYKKLIIFVPGALPKEEVTATITNVTPKFAEGTLQS) is the TRAM domain. Cys-76, Cys-82, Cys-85, and Cys-165 together coordinate [4Fe-4S] cluster. Positions 289, 318, 339, and 387 each coordinate S-adenosyl-L-methionine. The active-site Nucleophile is Cys-414.

The protein belongs to the class I-like SAM-binding methyltransferase superfamily. RNA M5U methyltransferase family.

This is an uncharacterized protein from Enterococcus faecalis (strain ATCC 700802 / V583).